Here is a 50-residue protein sequence, read N- to C-terminus: Large ribosomal subunit protein bL32A (50 aa).

Residues 1–19 show a composition bias toward basic residues; it reads MAVPKRRKSRSNTRHRRSQ. The tract at residues 1–21 is disordered; sequence MAVPKRRKSRSNTRHRRSQWK.

The protein belongs to the bacterial ribosomal protein bL32 family.

The polypeptide is Large ribosomal subunit protein bL32A (Saccharopolyspora erythraea (strain ATCC 11635 / DSM 40517 / JCM 4748 / NBRC 13426 / NCIMB 8594 / NRRL 2338)).